Consider the following 432-residue polypeptide: MILLRASEVRQLLHNKFVVILGDSVHRAVYKDLVLLLQKDRLLTPGQLRARGELNFEQDELVDGGQRGHMHNGLNYREVREFRSDHHLVRFYFLTRVYSDYLQTILKELQSGEHAPDLVIMNSCLWDISRYGPNSWRSYLENLENLFQCLGQVLPESCLLVWNTAMPVGEEVTGGFLPPKLRRQKATFLKNEVVKANFHSATEARKHNFDVLDLHFHFRHARENLHWDGVHWNGRVHRCLSQLLLAHVADAWGVELPHRHPVGEWIKKKKPGPRVEGPPQANRNHPALPLSPPLPSPTYRPLLGFPPQRLPLLPLLSPQPPPPILHHQGMPRFPQGPPDACFSSDHTFQSDQFYCHSDVPSSAHAGFFVEDNFMVGPQLPMPFFPTPRYQRPAPVVHRGFGRYRPRGPYTPWGQRPRPSKRRAPANPEPRPQ.

2 disordered regions span residues 264-293 (EWIK…LSPP) and 398-432 (RGFG…PRPQ).

Belongs to the PC-esterase family.

This chain is PC-esterase domain-containing protein 1B, found in Homo sapiens (Human).